Here is a 358-residue protein sequence, read N- to C-terminus: Peptide chain release factor 1 (358 aa).

Residue Gln-233 is modified to N5-methylglutamine.

Belongs to the prokaryotic/mitochondrial release factor family. Post-translationally, methylated by PrmC. Methylation increases the termination efficiency of RF1.

It is found in the cytoplasm. Peptide chain release factor 1 directs the termination of translation in response to the peptide chain termination codons UAG and UAA. The polypeptide is Peptide chain release factor 1 (Clostridium botulinum (strain 657 / Type Ba4)).